A 312-amino-acid polypeptide reads, in one-letter code: L-type lectin-like domain-containing protein C126.08c (312 aa).

The N-terminal stretch at 1 to 22 (MFFSVKNVFLLGIFGFVLGALA) is a signal peptide. The Extracellular portion of the chain corresponds to 23-280 (ETSHLERLSL…QKKGSFKKRL (258 aa)). Residues 24-248 (TSHLERLSLE…EIASILSRTI (225 aa)) enclose the L-type lectin-like domain. The helical transmembrane segment at 281 to 301 (IILLLSLIVIFSIFALRSYQV) threads the bilayer. At 302–312 (QQEKNRRTTVL) the chain is on the cytoplasmic side.

Its subcellular location is the membrane. The protein localises to the endoplasmic reticulum. The protein resides in the golgi apparatus. It is found in the vacuole. This Schizosaccharomyces pombe (strain 972 / ATCC 24843) (Fission yeast) protein is L-type lectin-like domain-containing protein C126.08c.